The following is a 59-amino-acid chain: MSEIKVGENESLDNAIKRFKRQCARSGVLSEYRKREHYEKPSVKKKKKSEAAKRKKRNF.

The interval 35–59 (REHYEKPSVKKKKKSEAAKRKKRNF) is disordered. The segment covering 43-59 (VKKKKKSEAAKRKKRNF) has biased composition (basic residues).

Belongs to the bacterial ribosomal protein bS21 family.

The chain is Small ribosomal subunit protein bS21 from Finegoldia magna (strain ATCC 29328 / DSM 20472 / WAL 2508) (Peptostreptococcus magnus).